We begin with the raw amino-acid sequence, 442 residues long: MEQQLTLVLLDSPKGAKYVETFEEAASSSSSSSSSSVPSCTDHRHRTFVKFFLYFSLVALAYYFIISSLAVSPIPPTLPQSSPGNVSSAKCDLFTGDWIPDPTGPLYTNVTCRHIQDFQNCLLNGRPDVNYLFWRWKPRDCDLPRFSPSQFLASVKNKWWAFIGDSIARNHVQSLICILSQVEEVEEIYHDKEFRSKIWRFPSHNFTLSVIWSPFLLKSETSSNSDIQLYLDQLDHKWTVQYPKFDYVVISGGKWFLKTTIFHENNVVTGCHYCQGRNNLTDLGYDYSYRKTLNLLRDFVLNSTHKPLVLFRTTTPDHFENGEWNTGGYCNRTMPFKEGQANMKTVDDVMRDVELEVFQKFGKGFGLGSNIRLLDTTGMSLLRPDGHPGPYRHPNPFAGVKNKSNVQNDCLHWCLPGPIDSWNDVMVETTLNRERELYDLTG.

Residues phenylalanine 51–valine 71 form a helical; Signal-anchor for type II membrane protein membrane-spanning segment. The GDS motif signature appears at glycine 164–serine 166. A DCXHWCLPGXXDXWN motif motif is present at residues aspartate 409–asparagine 423.

This sequence belongs to the PC-esterase family. TBL subfamily.

The protein localises to the membrane. May be involved in the O-acetylation of mannan. May act as a bridging protein that binds pectin and other cell wall polysaccharides. Probably involved in maintaining esterification of pectins. The protein is Protein trichome birefringence-like 26 (TBL26) of Arabidopsis thaliana (Mouse-ear cress).